The following is a 469-amino-acid chain: Threonine synthase (469 aa).

The residue at position 112 (Lys-112) is an N6-(pyridoxal phosphate)lysine.

This sequence belongs to the threonine synthase family. Requires pyridoxal 5'-phosphate as cofactor.

It carries out the reaction O-phospho-L-homoserine + H2O = L-threonine + phosphate. It functions in the pathway amino-acid biosynthesis; L-threonine biosynthesis; L-threonine from L-aspartate: step 5/5. In terms of biological role, catalyzes the gamma-elimination of phosphate from L-phosphohomoserine and the beta-addition of water to produce L-threonine. The sequence is that of Threonine synthase (thrC) from Pseudomonas aeruginosa (strain ATCC 15692 / DSM 22644 / CIP 104116 / JCM 14847 / LMG 12228 / 1C / PRS 101 / PAO1).